Here is a 283-residue protein sequence, read N- to C-terminus: Glutamate racemase (283 aa).

Substrate contacts are provided by residues 7–8 (DS) and 39–40 (YG). Cys70 acts as the Proton donor/acceptor in catalysis. Substrate is bound at residue 71 to 72 (NT). The Proton donor/acceptor role is filled by Cys206. Position 207–208 (207–208 (TH)) interacts with substrate.

Belongs to the aspartate/glutamate racemases family.

The catalysed reaction is L-glutamate = D-glutamate. It functions in the pathway cell wall biogenesis; peptidoglycan biosynthesis. Functionally, provides the (R)-glutamate required for cell wall biosynthesis. The polypeptide is Glutamate racemase (Phenylobacterium zucineum (strain HLK1)).